Consider the following 491-residue polypeptide: UDP-N-acetylmuramate--L-alanine ligase (491 aa).

126–132 (GTHGKTT) lines the ATP pocket.

This sequence belongs to the MurCDEF family.

It is found in the cytoplasm. The enzyme catalyses UDP-N-acetyl-alpha-D-muramate + L-alanine + ATP = UDP-N-acetyl-alpha-D-muramoyl-L-alanine + ADP + phosphate + H(+). It functions in the pathway cell wall biogenesis; peptidoglycan biosynthesis. Functionally, cell wall formation. The polypeptide is UDP-N-acetylmuramate--L-alanine ligase (Shigella flexneri serotype 5b (strain 8401)).